Reading from the N-terminus, the 327-residue chain is Phosphoenolpyruvate transferase (327 aa).

7,8-didemethyl-8-hydroxy-5-deazariboflavin is bound at residue Asp59.

The protein belongs to the CofD family. In terms of assembly, homodimer. Mg(2+) is required as a cofactor.

It carries out the reaction enolpyruvoyl-2-diphospho-5'-guanosine + 7,8-didemethyl-8-hydroxy-5-deazariboflavin = dehydro coenzyme F420-0 + GMP + H(+). Its pathway is cofactor biosynthesis; coenzyme F420 biosynthesis. Catalyzes the transfer of the phosphoenolpyruvate moiety from enoylpyruvoyl-2-diphospho-5'-guanosine (EPPG) to 7,8-didemethyl-8-hydroxy-5-deazariboflavin (FO) with the formation of dehydro coenzyme F420-0 and GMP. The polypeptide is Phosphoenolpyruvate transferase (Mycolicibacterium smegmatis (strain ATCC 700084 / mc(2)155) (Mycobacterium smegmatis)).